Consider the following 162-residue polypeptide: Ribosome maturation factor RimP (162 aa).

Belongs to the RimP family.

The protein localises to the cytoplasm. Functionally, required for maturation of 30S ribosomal subunits. This Leptospira biflexa serovar Patoc (strain Patoc 1 / Ames) protein is Ribosome maturation factor RimP.